Consider the following 1384-residue polypeptide: ATP-dependent RNA helicase TDRD9 (1384 aa).

A disordered region spans residues 35–60 (EAPREEVQRSEEVPSEAPTAQAQDPV). Basic and acidic residues predominate over residues 36–46 (APREEVQRSEE). One can recognise a Helicase ATP-binding domain in the interval 144 to 310 (ISLIESNSVV…FAVPVQNKMN (167 aa)). Position 157–164 (157–164 (GATGSGKS)) interacts with ATP. A DEAH box motif is present at residues 256-259 (DEVH). A Helicase C-terminal domain is found at 379-546 (SGAQFVSERS…VLKVKLLDMG (168 aa)). A Tudor domain is found at 946–1006 (HPHPDLVCLA…REIPCQLLEL (61 aa)).

Belongs to the DEAD box helicase family. DEAH subfamily. Interacts with piRNA-associated proteins PIWIL1 and PIWIL4.

It is found in the cytoplasm. The protein localises to the nucleus. The catalysed reaction is ATP + H2O = ADP + phosphate + H(+). In terms of biological role, ATP-binding RNA helicase which plays a central role during spermatogenesis by repressing transposable elements and preventing their mobilization, which is essential for the germline integrity. Acts via the piRNA metabolic process, which mediates the repression of transposable elements during meiosis by forming complexes composed of piRNAs and Piwi proteins and governs the methylation and subsequent repression of transposons. Acts downstream of piRNA biogenesis: exclusively required for transposon silencing in the nucleus, suggesting that it acts as a nuclear effector in the nucleus together with PIWIL4. The chain is ATP-dependent RNA helicase TDRD9 from Rattus norvegicus (Rat).